Consider the following 479-residue polypeptide: Chromosomal replication initiator protein DnaA (479 aa).

Positions 1-71 are domain I, interacts with DnaA modulators; sequence MNLTQIWKAT…RNALARVVGY (71 aa). A domain II region spans residues 71–138; the sequence is YPVQVQVLIA…LDLASAMRSG (68 aa). Residues 86–99 are compositionally biased toward polar residues; the sequence is TEPSPSLTLSNGSR. A disordered region spans residues 86-106; sequence TEPSPSLTLSNGSRLMSDPEP. The interval 139 to 355 is domain III, AAA+ region; it reads MLNPRYTFSS…GSLNRVAAYA (217 aa). G183, G185, K186, and T187 together coordinate ATP. The domain IV, binds dsDNA stretch occupies residues 356–479; the sequence is ELNRAPITIE…IRERIQMLRG (124 aa).

This sequence belongs to the DnaA family. As to quaternary structure, oligomerizes as a right-handed, spiral filament on DNA at oriC.

The protein resides in the cytoplasm. Plays an essential role in the initiation and regulation of chromosomal replication. ATP-DnaA binds to the origin of replication (oriC) to initiate formation of the DNA replication initiation complex once per cell cycle. Binds the DnaA box (a 9 base pair repeat at the origin) and separates the double-stranded (ds)DNA. Forms a right-handed helical filament on oriC DNA; dsDNA binds to the exterior of the filament while single-stranded (ss)DNA is stabiized in the filament's interior. The ATP-DnaA-oriC complex binds and stabilizes one strand of the AT-rich DNA unwinding element (DUE), permitting loading of DNA polymerase. After initiation quickly degrades to an ADP-DnaA complex that is not apt for DNA replication. Binds acidic phospholipids. The protein is Chromosomal replication initiator protein DnaA of Chloroflexus aurantiacus (strain ATCC 29366 / DSM 635 / J-10-fl).